The following is a 3583-amino-acid chain: Surfactin synthase subunit 2 (3583 aa).

Carrier domains lie at 965-1039 (APKT…EENE), 2005-2080 (APET…EASA), and 3034-3108 (APTT…ERAE). Residues S999, S2040, and S3069 each carry the O-(pantetheine 4'-phosphoryl)serine modification.

Belongs to the ATP-dependent AMP-binding enzyme family. The cofactor is pantetheine 4'-phosphate.

Its pathway is antibiotic biosynthesis; surfactin biosynthesis. This protein is a multifunctional enzyme able to activate and polymerize the amino acids Leu, Glu, Asp and Val. Activation sites for these AA consist of individual domains. The polypeptide is Surfactin synthase subunit 2 (srfAB) (Bacillus subtilis (strain 168)).